Reading from the N-terminus, the 540-residue chain is Glucose-6-phosphate isomerase (540 aa).

Residue E350 is the Proton donor of the active site. Active-site residues include H381 and K503.

It belongs to the GPI family.

Its subcellular location is the cytoplasm. The enzyme catalyses alpha-D-glucose 6-phosphate = beta-D-fructose 6-phosphate. The protein operates within carbohydrate biosynthesis; gluconeogenesis. It functions in the pathway carbohydrate degradation; glycolysis; D-glyceraldehyde 3-phosphate and glycerone phosphate from D-glucose: step 2/4. Functionally, catalyzes the reversible isomerization of glucose-6-phosphate to fructose-6-phosphate. This is Glucose-6-phosphate isomerase from Burkholderia orbicola (strain AU 1054).